Here is a 1082-residue protein sequence, read N- to C-terminus: AP-3 complex subunit beta-2 (1082 aa).

The disordered stretch occupies residues 1–30 (MSAAPAYSEDKGGSAGPGEPEYGHDPASGG). 2 positions are modified to phosphoserine: serine 272 and serine 282. Positions 666 to 677 (NREKRKEKEKPF) are enriched in basic and acidic residues. Residues 666 to 801 (NREKRKEKEK…KTPPGSKSAP (136 aa)) form a disordered region. The span at 691-700 (ADSEPESESE) shows a compositional bias: acidic residues. Residues 704–715 (KSSSGSGSGESS) show a composition bias toward low complexity. Acidic residues-rich tracts occupy residues 716–726 (SESDNEEEDEE) and 775–784 (VTSESEEEQV).

It belongs to the adaptor complexes large subunit family. In terms of assembly, adaptor protein complex 3 (AP-3) is a heterotetramer composed of two large adaptins (delta-type subunit AP3D1 and beta-type subunit AP3B1 or AP3B2), a medium adaptin (mu-type subunit AP3M1 or AP3M2) and a small adaptin (sigma-type subunit APS1 or AP3S2). AP-3 associates with the BLOC-1 complex.

The protein resides in the cytoplasmic vesicle. It is found in the clathrin-coated vesicle membrane. The protein localises to the golgi apparatus. Functionally, subunit of non-clathrin- and clathrin-associated adaptor protein complex 3 (AP-3) that plays a role in protein sorting in the late-Golgi/trans-Golgi network (TGN) and/or endosomes. The AP complexes mediate both the recruitment of clathrin to membranes and the recognition of sorting signals within the cytosolic tails of transmembrane cargo molecules. AP-3 appears to be involved in the sorting of a subset of transmembrane proteins targeted to lysosomes and lysosome-related organelles. In concert with the BLOC-1 complex, AP-3 is required to target cargos into vesicles assembled at cell bodies for delivery into neurites and nerve terminals. The chain is AP-3 complex subunit beta-2 (Ap3b2) from Mus musculus (Mouse).